We begin with the raw amino-acid sequence, 339 residues long: Holliday junction branch migration complex subunit RuvB (339 aa).

Residues 1-187 form a large ATPase domain (RuvB-L) region; the sequence is MQGFEDENRI…FGVICKLDYY (187 aa). Residues Leu-26, Arg-27, Gly-68, Lys-71, Thr-72, Thr-73, 134-136, Arg-177, Tyr-187, and Arg-224 contribute to the ATP site; that span reads EDF. Mg(2+) is bound at residue Thr-72. The segment at 188-258 is small ATPAse domain (RuvB-S); it reads TVDELSKIVL…VAKDALELLG (71 aa). Positions 261–339 are head domain (RuvB-H); the sequence is SLGLDFVDEK…HLKIPYPNEK (79 aa). Residues Arg-297, Arg-316, and Arg-321 each coordinate DNA.

It belongs to the RuvB family. In terms of assembly, homohexamer. Forms an RuvA(8)-RuvB(12)-Holliday junction (HJ) complex. HJ DNA is sandwiched between 2 RuvA tetramers; dsDNA enters through RuvA and exits via RuvB. An RuvB hexamer assembles on each DNA strand where it exits the tetramer. Each RuvB hexamer is contacted by two RuvA subunits (via domain III) on 2 adjacent RuvB subunits; this complex drives branch migration. In the full resolvosome a probable DNA-RuvA(4)-RuvB(12)-RuvC(2) complex forms which resolves the HJ.

The protein localises to the cytoplasm. The catalysed reaction is ATP + H2O = ADP + phosphate + H(+). The RuvA-RuvB-RuvC complex processes Holliday junction (HJ) DNA during genetic recombination and DNA repair, while the RuvA-RuvB complex plays an important role in the rescue of blocked DNA replication forks via replication fork reversal (RFR). RuvA specifically binds to HJ cruciform DNA, conferring on it an open structure. The RuvB hexamer acts as an ATP-dependent pump, pulling dsDNA into and through the RuvAB complex. RuvB forms 2 homohexamers on either side of HJ DNA bound by 1 or 2 RuvA tetramers; 4 subunits per hexamer contact DNA at a time. Coordinated motions by a converter formed by DNA-disengaged RuvB subunits stimulates ATP hydrolysis and nucleotide exchange. Immobilization of the converter enables RuvB to convert the ATP-contained energy into a lever motion, pulling 2 nucleotides of DNA out of the RuvA tetramer per ATP hydrolyzed, thus driving DNA branch migration. The RuvB motors rotate together with the DNA substrate, which together with the progressing nucleotide cycle form the mechanistic basis for DNA recombination by continuous HJ branch migration. Branch migration allows RuvC to scan DNA until it finds its consensus sequence, where it cleaves and resolves cruciform DNA. In Clostridioides difficile (strain 630) (Peptoclostridium difficile), this protein is Holliday junction branch migration complex subunit RuvB.